The following is a 904-amino-acid chain: Protein translocase subunit SecA (904 aa).

Residues Gln-89, 107–111, and Asp-496 contribute to the ATP site; that span reads GEGKT. The tract at residues 870–904 is disordered; it reads GGFQELSSGTPSPTVTVTTSSGGGTERKTSRRRKR. The segment covering 876-889 has biased composition (low complexity); it reads SSGTPSPTVTVTTS.

The protein belongs to the SecA family. In terms of assembly, monomer and homodimer. Part of the essential Sec protein translocation apparatus which comprises SecA, SecYEG and auxiliary proteins SecDF. Other proteins may also be involved.

The protein localises to the cell inner membrane. Its subcellular location is the cytoplasm. It catalyses the reaction ATP + H2O + cellular proteinSide 1 = ADP + phosphate + cellular proteinSide 2.. Functionally, part of the Sec protein translocase complex. Interacts with the SecYEG preprotein conducting channel. Has a central role in coupling the hydrolysis of ATP to the transfer of proteins into and across the cell membrane, serving as an ATP-driven molecular motor driving the stepwise translocation of polypeptide chains across the membrane. The sequence is that of Protein translocase subunit SecA from Leptospira borgpetersenii serovar Hardjo-bovis (strain L550).